The sequence spans 103 residues: Cystatin-A8 (103 aa).

The interval 1-20 (MESEEMLAGGLTEPRPATPE) is disordered. The Secondary area of contact signature appears at 51 to 55 (QVVAG).

Belongs to the cystatin family.

The protein localises to the cytoplasm. In terms of biological role, this is an intracellular thiol proteinase inhibitor. The chain is Cystatin-A8 from Sus scrofa (Pig).